The primary structure comprises 197 residues: dITP/XTP pyrophosphatase (197 aa).

Substrate is bound at residue 8-13 (TGNPGK). Glu40 and Asp69 together coordinate Mg(2+). Asp69 (proton acceptor) is an active-site residue. Substrate is bound by residues Ser70, 154-157 (FGYD), Lys177, and 182-183 (HR).

The protein belongs to the HAM1 NTPase family. As to quaternary structure, homodimer. Mg(2+) is required as a cofactor.

The catalysed reaction is XTP + H2O = XMP + diphosphate + H(+). It catalyses the reaction dITP + H2O = dIMP + diphosphate + H(+). It carries out the reaction ITP + H2O = IMP + diphosphate + H(+). Pyrophosphatase that catalyzes the hydrolysis of nucleoside triphosphates to their monophosphate derivatives, with a high preference for the non-canonical purine nucleotides XTP (xanthosine triphosphate), dITP (deoxyinosine triphosphate) and ITP. Seems to function as a house-cleaning enzyme that removes non-canonical purine nucleotides from the nucleotide pool, thus preventing their incorporation into DNA/RNA and avoiding chromosomal lesions. The polypeptide is dITP/XTP pyrophosphatase (Yersinia pestis).